Reading from the N-terminus, the 123-residue chain is Large ribosomal subunit protein uL14 (123 aa).

It belongs to the universal ribosomal protein uL14 family. Part of the 50S ribosomal subunit. Forms a cluster with proteins L3 and L19. In the 70S ribosome, L14 and L19 interact and together make contacts with the 16S rRNA in bridges B5 and B8.

Binds to 23S rRNA. Forms part of two intersubunit bridges in the 70S ribosome. The sequence is that of Large ribosomal subunit protein uL14 from Aliivibrio fischeri (strain ATCC 700601 / ES114) (Vibrio fischeri).